The following is a 1010-amino-acid chain: Protein translocase subunit SecA (1010 aa).

Residues glutamine 86, 104 to 108, and aspartate 535 each bind ATP; that span reads GEGKT. Residues 893 to 904 show a composition bias toward low complexity; sequence QAGAADGNAKGA. The disordered stretch occupies residues 893–916; the sequence is QAGAADGNAKGARTVRHSVRLPGR. The Zn(2+) site is built by cysteine 920, cysteine 922, cysteine 931, and histidine 932. Residues 950-981 show a composition bias toward low complexity; the sequence is QHAAVAADTPAQPAPQATATRPPTSQVPRGRA. Positions 950–1010 are disordered; the sequence is QHAAVAADTP…RGKGASARKK (61 aa).

The protein belongs to the SecA family. As to quaternary structure, monomer and homodimer. Part of the essential Sec protein translocation apparatus which comprises SecA, SecYEG and auxiliary proteins SecDF. Other proteins may also be involved. It depends on Zn(2+) as a cofactor.

It localises to the cell membrane. The protein localises to the cytoplasm. It carries out the reaction ATP + H2O + cellular proteinSide 1 = ADP + phosphate + cellular proteinSide 2.. Functionally, part of the Sec protein translocase complex. Interacts with the SecYEG preprotein conducting channel. Has a central role in coupling the hydrolysis of ATP to the transfer of proteins into and across the cell membrane, serving as an ATP-driven molecular motor driving the stepwise translocation of polypeptide chains across the membrane. This Roseiflexus sp. (strain RS-1) protein is Protein translocase subunit SecA.